We begin with the raw amino-acid sequence, 315 residues long: Ribosomal protein L11 methyltransferase (315 aa).

Residues threonine 163, glycine 185, aspartate 207, and asparagine 249 each coordinate S-adenosyl-L-methionine.

It belongs to the methyltransferase superfamily. PrmA family.

Its subcellular location is the cytoplasm. It catalyses the reaction L-lysyl-[protein] + 3 S-adenosyl-L-methionine = N(6),N(6),N(6)-trimethyl-L-lysyl-[protein] + 3 S-adenosyl-L-homocysteine + 3 H(+). Its function is as follows. Methylates ribosomal protein L11. This is Ribosomal protein L11 methyltransferase from Lactobacillus helveticus (strain DPC 4571).